We begin with the raw amino-acid sequence, 98 residues long: Small ribosomal subunit protein eS24 (98 aa).

Belongs to the eukaryotic ribosomal protein eS24 family.

The sequence is that of Small ribosomal subunit protein eS24 from Thermococcus gammatolerans (strain DSM 15229 / JCM 11827 / EJ3).